A 424-amino-acid polypeptide reads, in one-letter code: Putative ankyrin repeat protein R858 (424 aa).

4 ANK repeats span residues 115 to 144 (HLMC…FTKR), 147 to 177 (TDHT…SDYF), 184 to 215 (INDS…SINY), and 219 to 252 (TGST…DIHE).

The sequence is that of Putative ankyrin repeat protein R858 from Acanthamoeba polyphaga (Amoeba).